Reading from the N-terminus, the 254-residue chain is PF03932 family protein CutC (254 aa).

This sequence belongs to the CutC family.

The protein localises to the cytoplasm. This is PF03932 family protein CutC from Yersinia pestis bv. Antiqua (strain Antiqua).